Consider the following 694-residue polypeptide: Heat shock protein HSP 90-alpha (694 aa).

Residues threonine 5 and threonine 7 each carry the phosphothreonine; by PRKDC modification. The tract at residues aspartate 9–lysine 236 is interaction with NR3C1. Asparagine 51 lines the ATP pocket. N6-acetyllysine is present on residues lysine 58 and lysine 84. Aspartate 93, lysine 112, and phenylalanine 138 together coordinate ATP. Positions lysine 228–lysine 241 are enriched in basic and acidic residues. The tract at residues lysine 228–arginine 275 is disordered. A phosphoserine mark is found at serine 231 and serine 249. A compositionally biased stretch (acidic residues) spans proline 242 to glutamate 255. Residues lysine 256–lysine 268 show a composition bias toward basic and acidic residues. Residues aspartate 258–alanine 578 form an interaction with NR3C1 region. The segment at isoleucine 261–arginine 582 is interaction with FNIP2 and TSC1. Positions isoleucine 261–aspartate 694 are interaction with FLCN and FNIP1. The residue at position 289 (tyrosine 289) is a Phosphotyrosine. Arginine 376 serves as a coordination point for ATP. Residue lysine 419 is modified to N6-acetyllysine. Residue serine 429 is modified to Phosphoserine. The residue at position 434 (lysine 434) is an N6-acetyllysine. Serine 452 is subject to Phosphoserine. Lysine 465 bears the N6-acetyllysine mark. The residue at position 468 (tyrosine 468) is a Phosphotyrosine. N6-acetyllysine is present on lysine 547. Position 560 is an S-nitrosocysteine (cysteine 560). Residues methionine 590–valine 693 form an interaction with NR1D1 region. Position 603 is a phosphoserine (serine 603). Residues glutamine 644–aspartate 694 form a required for homodimerization region. Residues glutamate 662–aspartate 694 form a disordered region. Low complexity predominate over residues aspartate 668–glutamate 677. A TPR repeat-binding motif is present at residues aspartate 685–aspartate 694. Residues methionine 690–aspartate 694 are essential for interaction with SMYD3, TSC1 and STIP1/HOP. An essential for interaction with SGTA and TTC1 region spans residues glutamate 691–aspartate 694.

Belongs to the heat shock protein 90 family. Homodimer. Identified in NR3C1/GCR steroid receptor-chaperone complexes formed at least by NR3C1, HSP90AA1 and a variety of proteins containing TPR repeats such as FKBP4, FKBP5, PPID, PPP5C or STIP1. Forms a complex containing HSP90AA1, TSC1 and TSC2; TSC1 is required to recruit TCS2 to the complex. The closed form interacts (via the middle domain and TPR repeat-binding motif) with co-chaperone TSC1 (via C-terminus). Interacts with TOM34. Interacts with TERT; the interaction, together with PTGES3, is required for correct assembly and stabilization of the TERT holoenzyme complex. Interacts with CHORDC1 and DNAJC7. Interacts with STUB1 and UBE2N; may couple the chaperone and ubiquitination systems. Interacts (via TPR repeat-binding motif) with PPP5C (via TPR repeats); the interaction is direct and activates PPP5C phosphatase activity. Following LPS binding, may form a complex with CXCR4, GDF5 and HSPA8. Interacts with KSR1. Interacts with co-chaperone CDC37 (via C-terminus); the interaction inhibits HSP90AA1 ATPase activity. May interact with NWD1. Interacts with FNIP1 and FNIP2; the interaction inhibits HSP90AA1 ATPase activity. Interacts with co-chaperone AHSA1 (phosphorylated on 'Tyr-223'); the interaction activates HSP90AA1 ATPase activity and results in the dissociation of TSC1 from HSP90AA1. Interacts with FLCN in the presence of FNIP1. Interacts with HSP70, STIP1 and PTGES3. Interacts with SMYD3; this interaction enhances SMYD3 histone-lysine N-methyltransferase. Interacts with SGTA (via TPR repeats). Interacts with TTC1 (via TPR repeats). Interacts with HSF1 in an ATP-dependent manner. Interacts with MET; the interaction suppresses MET kinase activity. Interacts with ERBB2 in an ATP-dependent manner; the interaction suppresses ERBB2 kinase activity. Interacts with HIF1A, KEAP1 and RHOBTB2. Interacts with HSF1; this interaction is decreased in a IER5-dependent manner, promoting HSF1 accumulation in the nucleus, homotrimerization and DNA-binding activities. Interacts with STUB1 and SMAD3. Interacts with HSP90AB1; interaction is constitutive. Interacts with HECTD1 (via N-terminus). Interacts with NR3C1 (via domain NR LBD) and NR1D1 (via domain NR LBD). Interacts with NLPR12. Interacts with PDCL3. Interacts with TOMM70; the interaction is required for preprotein mitochondrial import. Interacts with TOMM70, IRF3 and TBK1; the interactions are direct and mediate the association of TOMM70 with IRF3 and TBK1. Forms a complex with ASL, ASS1 and NOS2; the complex regulates cell-autonomous L-arginine synthesis and citrulline recycling while channeling extracellular L-arginine to nitric oxide synthesis pathway. In terms of processing, ISGylated. Post-translationally, S-nitrosylated; negatively regulates the ATPase activity and the activation of eNOS by HSP90AA1. Ubiquitinated via 'Lys-63'-linked polyubiquitination by HECTD1. Ubiquitination promotes translocation into the cytoplasm away from the membrane and secretory pathways.

It is found in the nucleus. It localises to the cytoplasm. The protein localises to the melanosome. Its subcellular location is the cell membrane. The protein resides in the mitochondrion. It catalyses the reaction ATP + H2O = ADP + phosphate + H(+). Its activity is regulated as follows. In the resting state, through the dimerization of its C-terminal domain, HSP90 forms a homodimer which is defined as the open conformation. Upon ATP-binding, the N-terminal domain undergoes significant conformational changes and comes in contact to form an active closed conformation. After HSP90 finishes its chaperoning tasks of assisting the proper folding, stabilization and activation of client proteins under the active state, ATP molecule is hydrolyzed to ADP which then dissociates from HSP90 and directs the protein back to the resting state. Co-chaperone TSC1 promotes ATP binding and inhibits HSP90AA1 ATPase activity. Binding to phosphorylated AHSA1 promotes HSP90AA1 ATPase activity. Inhibited by geldanamycin, Ganetespib (STA-9090) and SNX-2112. In terms of biological role, molecular chaperone that promotes the maturation, structural maintenance and proper regulation of specific target proteins involved for instance in cell cycle control and signal transduction. Undergoes a functional cycle that is linked to its ATPase activity which is essential for its chaperone activity. This cycle probably induces conformational changes in the client proteins, thereby causing their activation. Interacts dynamically with various co-chaperones that modulate its substrate recognition, ATPase cycle and chaperone function. Engages with a range of client protein classes via its interaction with various co-chaperone proteins or complexes, that act as adapters, simultaneously able to interact with the specific client and the central chaperone itself. Recruitment of ATP and co-chaperone followed by client protein forms a functional chaperone. After the completion of the chaperoning process, properly folded client protein and co-chaperone leave HSP90 in an ADP-bound partially open conformation and finally, ADP is released from HSP90 which acquires an open conformation for the next cycle. Plays a critical role in mitochondrial import, delivers preproteins to the mitochondrial import receptor TOMM70. Apart from its chaperone activity, it also plays a role in the regulation of the transcription machinery. HSP90 and its co-chaperones modulate transcription at least at three different levels. In the first place, they alter the steady-state levels of certain transcription factors in response to various physiological cues. Second, they modulate the activity of certain epigenetic modifiers, such as histone deacetylases or DNA methyl transferases, and thereby respond to the change in the environment. Third, they participate in the eviction of histones from the promoter region of certain genes and thereby turn on gene expression. Binds bacterial lipopolysaccharide (LPS) and mediates LPS-induced inflammatory response, including TNF secretion by monocytes. Antagonizes STUB1-mediated inhibition of TGF-beta signaling via inhibition of STUB1-mediated SMAD3 ubiquitination and degradation. Mediates the association of TOMM70 with IRF3 or TBK1 in mitochondrial outer membrane which promotes host antiviral response. This is Heat shock protein HSP 90-alpha (HSP90AA1) from Oryctolagus cuniculus (Rabbit).